Consider the following 121-residue polypeptide: Non-structural protein 8 (121 aa).

The first 15 residues, 1–15, serve as a signal peptide directing secretion; that stretch reads MKLLIVFGLLASVYC. In terms of domain architecture, SARS ORF8 Ig-like spans 19–121; it reads ECSIQECCEN…HDVRVVLDFI (103 aa). Cystine bridges form between Cys25–Cys90, Cys37–Cys102, and Cys61–Cys83.

This Bat coronavirus HKU3 (BtCoV) protein is Non-structural protein 8.